Consider the following 197-residue polypeptide: Guanylyl cyclase-activating protein 2 (197 aa).

The N-myristoyl glycine moiety is linked to residue Gly2. 4 EF-hand domains span residues 15 to 50 (DVAE…QDNQ), 51 to 86 (EAAD…VLRG), 87 to 122 (KLEH…IYNL), and 138 to 173 (SPEQ…DKWV). Ca(2+) is bound by residues Asp64, Asn66, Asp68, Thr70, Glu75, Asp100, Asp102, Asn104, Cys106, Glu111, Asp151, Asn153, Asp155, Gln157, and Glu162.

Low expression in retina.

Stimulates guanylyl cyclase 1 (GC1) and GC2 when free calcium ions concentration is low and inhibits guanylyl cyclases when free calcium ions concentration is elevated. This Ca(2+)-sensitive regulation of guanylyl cyclase (GC) is a key event in recovery of the dark state of rod photoreceptors following light exposure. This is Guanylyl cyclase-activating protein 2 (GUCA1B) from Lithobates pipiens (Northern leopard frog).